The chain runs to 156 residues: ATP synthase subunit b (156 aa).

Residues 11–31 (AIAFVLFVIFCMKYVWPPIMA) form a helical membrane-spanning segment.

It belongs to the ATPase B chain family. F-type ATPases have 2 components, F(1) - the catalytic core - and F(0) - the membrane proton channel. F(1) has five subunits: alpha(3), beta(3), gamma(1), delta(1), epsilon(1). F(0) has three main subunits: a(1), b(2) and c(10-14). The alpha and beta chains form an alternating ring which encloses part of the gamma chain. F(1) is attached to F(0) by a central stalk formed by the gamma and epsilon chains, while a peripheral stalk is formed by the delta and b chains.

The protein localises to the cell inner membrane. Its function is as follows. F(1)F(0) ATP synthase produces ATP from ADP in the presence of a proton or sodium gradient. F-type ATPases consist of two structural domains, F(1) containing the extramembraneous catalytic core and F(0) containing the membrane proton channel, linked together by a central stalk and a peripheral stalk. During catalysis, ATP synthesis in the catalytic domain of F(1) is coupled via a rotary mechanism of the central stalk subunits to proton translocation. Functionally, component of the F(0) channel, it forms part of the peripheral stalk, linking F(1) to F(0). The protein is ATP synthase subunit b of Yersinia pseudotuberculosis serotype O:1b (strain IP 31758).